The sequence spans 492 residues: N-succinylglutamate 5-semialdehyde dehydrogenase (492 aa).

Position 220–225 (220–225) interacts with NAD(+); sequence GSANTG. Residues Glu243 and Cys277 contribute to the active site.

It belongs to the aldehyde dehydrogenase family. AstD subfamily.

The enzyme catalyses N-succinyl-L-glutamate 5-semialdehyde + NAD(+) + H2O = N-succinyl-L-glutamate + NADH + 2 H(+). The protein operates within amino-acid degradation; L-arginine degradation via AST pathway; L-glutamate and succinate from L-arginine: step 4/5. Its function is as follows. Catalyzes the NAD-dependent reduction of succinylglutamate semialdehyde into succinylglutamate. The sequence is that of N-succinylglutamate 5-semialdehyde dehydrogenase from Escherichia coli O139:H28 (strain E24377A / ETEC).